The following is a 239-amino-acid chain: Lipid transferase CIDEC (239 aa).

Positions 1–35 are required for liquid-liquid phase separation (LLPS); it reads MDYAMKSLSLLYPRSLSRHVAVSTAVVTQQLVSKP. In terms of domain architecture, CIDE-N spans 41-118; that stretch reads RARPCRVSTA…VLLKGQKWKP (78 aa). The RKKR polybasic motif motif lies at 123-126; that stretch reads RKKR.

Belongs to the CIDE family. In terms of assembly, homodimer. Homooligomer; undergoes liquid-liquid phase separation (LLPS) via its N-terminus, facilitating lipid droplet fusion, occurs at the lipid droplet contact sites. Interacts with CIDEA. Interacts with PLIN1. Interacts with NFAT5; this interaction is direct and retains NFAT5 in the cytoplasm. Interacts with CEBPB. Interacts with isoform CLSTN3beta of CLSTN3; inhibiting the lipid transferase activity of CIDEC. In terms of processing, ubiquitinated and targeted to proteasomal degradation, resulting in a short half-life (about 15 minutes in 3T3-L1 cells). Protein stability depends on triaclyglycerol synthesis, fatty acid availability and lipid droplet formation. Expressed almost exclusively in adipose tissue, including subcutaneous and epididymal white adipose tissue (at protein level). Although abundantly present in brown adipose tissue at the mRNA level, the protein is almost undetectable in this tissue, or at moderate levels. Expressed in the mammary gland, in stromal adipose tissue, but becomes undetectable at the end of pregnancy and during lactation (at protein level). Expressed at low levels in skeletal muscle and heart.

The protein resides in the lipid droplet. It localises to the endoplasmic reticulum. It is found in the nucleus. It carries out the reaction a triacyl-sn-glycerol(in) = a triacyl-sn-glycerol(out). Its function is as follows. Lipid transferase specifically expressed in white adipose tissue, which promotes unilocular lipid droplet formation by mediating lipid droplet fusion. Lipid droplet fusion promotes their enlargement, restricting lipolysis and favoring lipid storage. Localizes on the lipid droplet surface, at focal contact sites between lipid droplets, and mediates atypical lipid droplet fusion by undergoing liquid-liquid phase separation (LLPS) and promoting directional net neutral lipid transfer from the smaller to larger lipid droplets. The transfer direction may be driven by the internal pressure difference between the contacting lipid droplet pair. Its role in neutral lipid transfer and lipid droplet enlargement is activated by the interaction with PLIN1. May also act as a CEBPB coactivator in the white adipose tissue to control the expression of a subset of CEBPB downstream target genes, including SOCS1, SOCS3, TGFB1, TGFBR1, ID2 and XDH. When overexpressed in preadipocytes, induces apoptosis or increases cell susceptibility to apoptosis induced by serum deprivation or TGFB treatment. In Mus musculus (Mouse), this protein is Lipid transferase CIDEC.